The primary structure comprises 352 residues: Dof zinc finger protein DOF1.8 (352 aa).

The interval Leu-24–Asp-46 is disordered. Residues Val-37–Asp-46 show a composition bias toward basic and acidic residues. The Dof-type zinc finger occupies Leu-49 to Arg-103. Residues Cys-51, Cys-54, Cys-76, and Cys-79 each contribute to the Zn(2+) site. 2 disordered regions span residues Pro-93–His-136 and Gly-265–Trp-334. Residues Ser-104 to Thr-129 are compositionally biased toward low complexity. Residues Glu-310 to Glu-323 show a composition bias toward basic and acidic residues.

The protein localises to the nucleus. Its function is as follows. Transcription factor that binds specifically to a 5'-AA[AG]G-3' consensus core sequence. The protein is Dof zinc finger protein DOF1.8 (DOF1.8) of Arabidopsis thaliana (Mouse-ear cress).